The primary structure comprises 478 residues: Protein nucleotidyltransferase YdiU (478 aa).

ATP-binding residues include Gly83, Gly85, Arg86, Lys106, Asp118, Gly119, Arg169, and Arg176. The active-site Proton acceptor is the Asp245. Asn246 and Asp255 together coordinate Mg(2+). ATP is bound at residue Asp255.

The protein belongs to the SELO family. It depends on Mg(2+) as a cofactor. Mn(2+) is required as a cofactor.

It catalyses the reaction L-seryl-[protein] + ATP = 3-O-(5'-adenylyl)-L-seryl-[protein] + diphosphate. The catalysed reaction is L-threonyl-[protein] + ATP = 3-O-(5'-adenylyl)-L-threonyl-[protein] + diphosphate. The enzyme catalyses L-tyrosyl-[protein] + ATP = O-(5'-adenylyl)-L-tyrosyl-[protein] + diphosphate. It carries out the reaction L-histidyl-[protein] + UTP = N(tele)-(5'-uridylyl)-L-histidyl-[protein] + diphosphate. It catalyses the reaction L-seryl-[protein] + UTP = O-(5'-uridylyl)-L-seryl-[protein] + diphosphate. The catalysed reaction is L-tyrosyl-[protein] + UTP = O-(5'-uridylyl)-L-tyrosyl-[protein] + diphosphate. Functionally, nucleotidyltransferase involved in the post-translational modification of proteins. It can catalyze the addition of adenosine monophosphate (AMP) or uridine monophosphate (UMP) to a protein, resulting in modifications known as AMPylation and UMPylation. This chain is Protein nucleotidyltransferase YdiU, found in Exiguobacterium sp. (strain ATCC BAA-1283 / AT1b).